The primary structure comprises 52 residues: MAVPKKRTSISKKRIRKKIWKRKGYWTSLKAFSLGKSLSTGNSKSFFVQQKN.

This sequence belongs to the bacterial ribosomal protein bL32 family.

Its subcellular location is the plastid. The protein localises to the chloroplast. In Lobularia maritima (Sweet alyssum), this protein is Large ribosomal subunit protein bL32c.